The chain runs to 422 residues: Enolase 2 (422 aa).

Gln-162 is a (2R)-2-phosphoglycerate binding site. Glu-204 functions as the Proton donor in the catalytic mechanism. Mg(2+)-binding residues include Asp-241, Glu-285, and Asp-312. (2R)-2-phosphoglycerate-binding residues include Lys-337, Arg-366, Ser-367, and Lys-388. The active-site Proton acceptor is the Lys-337.

Belongs to the enolase family. Requires Mg(2+) as cofactor.

The protein localises to the cytoplasm. It localises to the secreted. The protein resides in the cell surface. It catalyses the reaction (2R)-2-phosphoglycerate = phosphoenolpyruvate + H2O. The protein operates within carbohydrate degradation; glycolysis; pyruvate from D-glyceraldehyde 3-phosphate: step 4/5. Functionally, catalyzes the reversible conversion of 2-phosphoglycerate (2-PG) into phosphoenolpyruvate (PEP). It is essential for the degradation of carbohydrates via glycolysis. The protein is Enolase 2 of Lactococcus lactis subsp. lactis (strain IL1403) (Streptococcus lactis).